We begin with the raw amino-acid sequence, 485 residues long: NADH-quinone oxidoreductase subunit N (485 aa).

A run of 14 helical transmembrane segments spans residues 8-28 (LIAL…MLSI), 35-55 (FLNA…LWFV), 71-91 (GFAM…CTFA), 105-125 (FYLL…ANHL), 127-147 (SLFL…GYAF), 159-179 (YTIL…LVYA), 203-223 (LLAG…LVPF), 235-255 (PAPV…GVVM), 271-291 (VVLA…ALSQ), 297-317 (LLGY…IALQ), 326-346 (VGVY…VVSL), 373-393 (AAVM…LGFI), 408-430 (WWLV…RVAV), and 455-475 (IVVL…QPLI).

Belongs to the complex I subunit 2 family. NDH-1 is composed of 13 different subunits. Subunits NuoA, H, J, K, L, M, N constitute the membrane sector of the complex.

It is found in the cell inner membrane. It catalyses the reaction a quinone + NADH + 5 H(+)(in) = a quinol + NAD(+) + 4 H(+)(out). Its function is as follows. NDH-1 shuttles electrons from NADH, via FMN and iron-sulfur (Fe-S) centers, to quinones in the respiratory chain. The immediate electron acceptor for the enzyme in this species is believed to be ubiquinone. Couples the redox reaction to proton translocation (for every two electrons transferred, four hydrogen ions are translocated across the cytoplasmic membrane), and thus conserves the redox energy in a proton gradient. This chain is NADH-quinone oxidoreductase subunit N, found in Escherichia coli O1:K1 / APEC.